The following is a 204-amino-acid chain: MDQKQALKFCTVCASNNNRSMESHRILQEAGYEVSSYGTGSAVRLPGLSFDKPNVYPFGTPYNDIYNDLLSQSAERYKANGLLQMLDRNRRLKKAPEKWQEGTKTFDFVFTCEERCFDAVCEDLMNRGGRLNKIVHVINIDIRDDNENAKIGGRAILELANMLNEKVSECEQNDTLFEDCILDILTKWQEAHPQLPCLYAPSYY.

The protein belongs to the SSU72 phosphatase family. As to quaternary structure, component of the cleavage and polyadenylation factor (CPF) complex.

It localises to the nucleus. It catalyses the reaction O-phospho-L-seryl-[protein] + H2O = L-seryl-[protein] + phosphate. The catalysed reaction is O-phospho-L-threonyl-[protein] + H2O = L-threonyl-[protein] + phosphate. Functionally, processively dephosphorylates Ser-5 of the heptad repeats YSPTSPS in the C-terminal domain of the largest RNA polymerase II subunit (RPB1). In terms of biological role, component of the cleavage and polyadenylation factor (CPF) complex, which plays a key role in polyadenylation-dependent pre-mRNA 3'-end formation and cooperates with cleavage factors including the CFIA complex and NAB4/CFIB. SSU72 is required for 3'-end formation of snoRNAs. The chain is RNA polymerase II subunit A C-terminal domain phosphatase SSU72 (SSU72) from Candida glabrata (strain ATCC 2001 / BCRC 20586 / JCM 3761 / NBRC 0622 / NRRL Y-65 / CBS 138) (Yeast).